Here is a 275-residue protein sequence, read N- to C-terminus: Bis(5'-nucleosyl)-tetraphosphatase, symmetrical (275 aa).

This sequence belongs to the Ap4A hydrolase family.

The catalysed reaction is P(1),P(4)-bis(5'-adenosyl) tetraphosphate + H2O = 2 ADP + 2 H(+). In terms of biological role, hydrolyzes diadenosine 5',5'''-P1,P4-tetraphosphate to yield ADP. The sequence is that of Bis(5'-nucleosyl)-tetraphosphatase, symmetrical from Hamiltonella defensa subsp. Acyrthosiphon pisum (strain 5AT).